A 483-amino-acid polypeptide reads, in one-letter code: Ribulose bisphosphate carboxylase large chain (483 aa).

Residues 1 to 2 (MS) constitute a propeptide that is removed on maturation. Substrate is bound by residues asparagine 123 and threonine 173. Lysine 175 serves as the catalytic Proton acceptor. Lysine 177 contacts substrate. Mg(2+) contacts are provided by lysine 201, aspartate 203, and glutamate 204. Lysine 201 bears the N6-carboxylysine mark. Serine 208 is subject to Phosphoserine. Residue histidine 294 is the Proton acceptor of the active site. The substrate site is built by arginine 295 and histidine 327. Threonine 330 is modified (phosphothreonine). Serine 379 serves as a coordination point for substrate.

This sequence belongs to the RuBisCO large chain family. Type I subfamily. As to quaternary structure, heterohexadecamer of 8 large chains and 8 small chains; disulfide-linked. The disulfide link is formed within the large subunit homodimers. Requires Mg(2+) as cofactor. The disulfide bond which can form in the large chain dimeric partners within the hexadecamer appears to be associated with oxidative stress and protein turnover.

The protein localises to the plastid. It is found in the chloroplast. The enzyme catalyses 2 (2R)-3-phosphoglycerate + 2 H(+) = D-ribulose 1,5-bisphosphate + CO2 + H2O. The catalysed reaction is D-ribulose 1,5-bisphosphate + O2 = 2-phosphoglycolate + (2R)-3-phosphoglycerate + 2 H(+). RuBisCO catalyzes two reactions: the carboxylation of D-ribulose 1,5-bisphosphate, the primary event in carbon dioxide fixation, as well as the oxidative fragmentation of the pentose substrate in the photorespiration process. Both reactions occur simultaneously and in competition at the same active site. In Aethionema cordifolium (Lebanon stonecress), this protein is Ribulose bisphosphate carboxylase large chain.